The sequence spans 33 residues: Cytochrome b6-f complex subunit 7 (33 aa).

The helical transmembrane segment at 5–25 threads the bilayer; that stretch reads IFNTAVITFTLVLVGLGAGYL.

It belongs to the PetM family. In terms of assembly, the 4 large subunits of the cytochrome b6-f complex are cytochrome b6, subunit IV (17 kDa polypeptide, PetD), cytochrome f and the Rieske protein, while the 4 small subunits are PetG, PetL, PetM and PetN. The complex functions as a dimer.

It localises to the cellular thylakoid membrane. Component of the cytochrome b6-f complex, which mediates electron transfer between photosystem II (PSII) and photosystem I (PSI), cyclic electron flow around PSI, and state transitions. The protein is Cytochrome b6-f complex subunit 7 of Thermosynechococcus vestitus (strain NIES-2133 / IAM M-273 / BP-1).